Here is a 480-residue protein sequence, read N- to C-terminus: UDP-N-acetylmuramoylalanine--D-glutamate ligase (480 aa).

An ATP-binding site is contributed by 120 to 126 (GTNGKTT).

This sequence belongs to the MurCDEF family.

Its subcellular location is the cytoplasm. It catalyses the reaction UDP-N-acetyl-alpha-D-muramoyl-L-alanine + D-glutamate + ATP = UDP-N-acetyl-alpha-D-muramoyl-L-alanyl-D-glutamate + ADP + phosphate + H(+). The protein operates within cell wall biogenesis; peptidoglycan biosynthesis. Functionally, cell wall formation. Catalyzes the addition of glutamate to the nucleotide precursor UDP-N-acetylmuramoyl-L-alanine (UMA). In Nocardia farcinica (strain IFM 10152), this protein is UDP-N-acetylmuramoylalanine--D-glutamate ligase.